We begin with the raw amino-acid sequence, 124 residues long: Ribonuclease pancreatic (124 aa).

Residues 1-13 (KESAAAKFERQHM) are compositionally biased toward basic and acidic residues. The disordered stretch occupies residues 1–24 (KESAAAKFERQHMDSSTSSASSSN). The substrate site is built by Lys7 and Arg10. The active-site Proton acceptor is His12. 4 disulfides stabilise this stretch: Cys26-Cys84, Cys40-Cys95, Cys58-Cys110, and Cys65-Cys72. Residue Asn34 is glycosylated (N-linked (GlcNAc...) asparagine; partial). Substrate contacts are provided by residues 41-45 (KPVNT), Lys66, and Arg85. His119 functions as the Proton donor in the catalytic mechanism.

The protein belongs to the pancreatic ribonuclease family. In terms of assembly, monomer. Interacts with and forms tight 1:1 complexes with RNH1. Dimerization of two such complexes may occur. Interaction with RNH1 inhibits this protein. Pancreas.

It localises to the secreted. The enzyme catalyses an [RNA] containing cytidine + H2O = an [RNA]-3'-cytidine-3'-phosphate + a 5'-hydroxy-ribonucleotide-3'-[RNA].. It carries out the reaction an [RNA] containing uridine + H2O = an [RNA]-3'-uridine-3'-phosphate + a 5'-hydroxy-ribonucleotide-3'-[RNA].. Functionally, endonuclease that catalyzes the cleavage of RNA on the 3' side of pyrimidine nucleotides. Acts on single-stranded and double-stranded RNA. The chain is Ribonuclease pancreatic (RNASE1) from Aepyceros melampus (Impala).